Reading from the N-terminus, the 82-residue chain is Delta-ctenitoxin-Pn2c (82 aa).

A signal peptide spans 1–17; that stretch reads MKVAILFLSILVLAVAS. Positions 18–34 are excised as a propeptide; sequence ESIEESRDDFAVEELGR. 5 disulfide bridges follow: Cys37/Cys51, Cys44/Cys57, Cys48/Cys80, Cys50/Cys65, and Cys59/Cys63.

As to expression, expressed by the venom gland.

The protein localises to the secreted. Its function is as follows. Reversible inhibitor of voltage-gated sodium channels (Nav). Delays the fast inactivation kinetics of neuronal-type sodium channels. In vivo, it induces rat penile erection. This effect may be due to the neuronal nitric oxide synthase (NOS1), since one of its selective inhibitor completely abolishes all the toxic effects of the toxin. This toxin also causes scratching, lacrimation, hypersalivation, sweating and agitation followed by spastic paralysis of the anterior and posterior extremities and death at dose levels of 0.24 mg/mouse. It is also insecticidal to the larval and adult forms of the house fly. In Phoneutria nigriventer (Brazilian armed spider), this protein is Delta-ctenitoxin-Pn2c.